An 825-amino-acid polypeptide reads, in one-letter code: Quinic acid utilization activator (825 aa).

A compositionally biased stretch (polar residues) spans 1-12 (MSSDTRQTSGGN). A disordered region spans residues 1-45 (MSSDTRQTSGGNARSKRRLTDAVDEDGRPTATAEDPTSNPKRQRV). Basic and acidic residues predominate over residues 18–28 (RLTDAVDEDGR). The zn(2)-C6 fungal-type DNA-binding region spans 49–76 (CDSCRSKKDKCDGAQPICSTCASLSRPC). Disordered stretches follow at residues 160-186 (EQPE…SSVL), 204-224 (QSPL…TTRL), and 658-683 (GSQR…SLPG). Residues 165-174 (DQERSARGEI) show a composition bias toward basic and acidic residues. Residues 658 to 672 (GSQRRPRHATQQGTH) are compositionally biased toward polar residues.

It is found in the nucleus. Functionally, transcription activation of genes for enzymes and proteins of quinate metabolism by binding to a 16 base-pair sequence (consensus 5'-GGATAANNNNTTATCC-3') in front of each qut gene. The polypeptide is Quinic acid utilization activator (qutA) (Emericella nidulans (strain FGSC A4 / ATCC 38163 / CBS 112.46 / NRRL 194 / M139) (Aspergillus nidulans)).